The chain runs to 273 residues: MGSFKGHALPGSFFFAMGFWWTMKNILKSVYKRQTRTCYLNSKTLLRRTEIWEGVVVLLMSLTGIAGEQFISGGPALILHKDGQWNQILGWHHTTMYLFFGLQGITQIICFTTNVLPLSSSKLMLSIAIFVETFMFYNHTHGREMIDIFVHQLLVFVGTFSGLVAFLEFLVKNNALLELLRCSLLMFQGTWFWQMAFVLYPPCGSATWNLSDIQNKMFLSMCFCWHYASILILIGVKYALANWLVKSRLRKGCTSEVGLLKHADREQESEEEV.

5 consecutive transmembrane segments (helical) span residues 8-27 (ALPG…KNIL), 55-79 (VVVL…ALIL), 108-131 (IICF…AIFV), 153-171 (LLVF…EFLV), and 217-236 (MFLS…LIGV).

It belongs to the TMEM45 family.

The protein localises to the membrane. The sequence is that of Transmembrane protein 45A (Tmem45a) from Mus musculus (Mouse).